The chain runs to 62 residues: Chromatin protein Cren7 (62 aa).

It belongs to the Cren7 family. In terms of assembly, monomer. Post-translationally, methylated at multiple sites, to varying extents.

The protein resides in the chromosome. It is found in the cytoplasm. A chromatin protein, binds double-stranded DNA without sequence specificity. Constrains negative DNA supercoils. This Staphylothermus marinus (strain ATCC 43588 / DSM 3639 / JCM 9404 / F1) protein is Chromatin protein Cren7.